We begin with the raw amino-acid sequence, 399 residues long: MERGGYGGGSGQGYNNFAVPPPNYQQMPNKTGNYNEPPPNYGKQGGGYDSGSGHRGSGGSGNGGGGGGSWNDRGGNSYGNGGASKDSYNKGHGGYSGGGGGGGGGGGGGSGGNDMITQEDTIFVSGMDPSTTEQDIETHFGAIGIIKKDKRTMKPKIWLYKNKETGASKGEATVTYDDTNAAQSAIEWFDGRDFNGNAIKVSLAQRQNNWNKGGGGGGGGGGRGGFGGRRGGGGGGGGGGGGGGRFDRGGGGGGGRYDRGGGGGGGGGGGNVQPRDGDWKCNSCNNTNFAWRNECNRCKTPKGDDEGSSGGGGGGGYGGGGGGGGYDRGNDRGSGGGGYHNRDRGGNSQGGGGGGGGGGGYSRFNDNNGGGRGGRGGGGGNRRDGGPMRNDGGMRSRPY.

The span at 1-12 (MERGGYGGGSGQ) shows a compositional bias: gly residues. A disordered region spans residues 1–82 (MERGGYGGGS…RGGNSYGNGG (82 aa)). Over residues 24 to 34 (YQQMPNKTGNY) the composition is skewed to polar residues. Positions 43-69 (KQGGGYDSGSGHRGSGGSGNGGGGGGS) are enriched in gly residues. The RRM domain maps to 120-206 (DTIFVSGMDP…NAIKVSLAQR (87 aa)). Disordered stretches follow at residues 209–276 (NWNK…QPRD) and 300–399 (TPKG…SRPY). The segment covering 212-271 (KGGGGGGGGGGRGGFGGRRGGGGGGGGGGGGGGRFDRGGGGGGGRYDRGGGGGGGGGGGN) has biased composition (gly residues). A RanBP2-type zinc finger spans residues 275–304 (RDGDWKCNSCNNTNFAWRNECNRCKTPKGD). Composition is skewed to gly residues over residues 308-339 (SSGG…GGGY), 347-361 (NSQG…GGGY), and 368-380 (NGGG…GGGG). The segment covering 387 to 399 (PMRNDGGMRSRPY) has biased composition (low complexity).

The protein belongs to the RRM TET family. In terms of tissue distribution, ubiquitous. Enriched in the brain and central nervous system during embryogenesis. Enriched in the adult head. Embryos contain both isoforms A and B, whereas later in development (heads and torsos) only isoform B is detected.

It is found in the nucleus. May participate in a function common to the expression of most genes transcribed by RNA polymerase II. This Drosophila melanogaster (Fruit fly) protein is RNA-binding protein cabeza (caz).